Reading from the N-terminus, the 110-residue chain is uncharacterized protein (110 aa).

The chain crosses the membrane as a helical span at residues 29-49 (GLAFIFFFLVAFYFFPAFWDL).

Its subcellular location is the membrane. This is an uncharacterized protein from Saccharomyces cerevisiae (strain ATCC 204508 / S288c) (Baker's yeast).